Reading from the N-terminus, the 308-residue chain is Probable manganese-dependent inorganic pyrophosphatase (308 aa).

Mn(2+) contacts are provided by H9, D13, D15, D75, H97, and D149.

It belongs to the PPase class C family. Mn(2+) is required as a cofactor.

The protein localises to the cytoplasm. It carries out the reaction diphosphate + H2O = 2 phosphate + H(+). This chain is Probable manganese-dependent inorganic pyrophosphatase, found in Bacillus pumilus (strain SAFR-032).